Here is a 380-residue protein sequence, read N- to C-terminus: 3-dehydroquinate synthase (380 aa).

It belongs to the archaeal-type DHQ synthase family.

The enzyme catalyses 2-amino-2,3,7-trideoxy-D-lyxo-hept-6-ulosonate + NAD(+) + H2O = 3-dehydroquinate + NH4(+) + NADH + H(+). In terms of biological role, catalyzes the oxidative deamination and cyclization of 2-amino-3,7-dideoxy-D-threo-hept-6-ulosonic acid (ADH) to yield 3-dehydroquinate (DHQ), which is fed into the canonical shikimic pathway of aromatic amino acid biosynthesis. The sequence is that of 3-dehydroquinate synthase from Methanosarcina mazei (strain ATCC BAA-159 / DSM 3647 / Goe1 / Go1 / JCM 11833 / OCM 88) (Methanosarcina frisia).